A 216-amino-acid polypeptide reads, in one-letter code: Somatotropin (216 aa).

Positions 1 to 26 (MAAGPRNSMLLVFALLSLPWPQEVGA) are cleaved as a signal peptide. Histidine 45 lines the Zn(2+) pocket. A disulfide bridge connects residues cysteine 78 and cysteine 189. The residue at position 131 (serine 131) is a Phosphoserine. Glutamate 198 is a Zn(2+) binding site. An intrachain disulfide couples cysteine 206 to cysteine 214.

The protein belongs to the somatotropin/prolactin family.

It localises to the secreted. Its function is as follows. Plays an important role in growth control. Its major role in stimulating body growth is to stimulate the liver and other tissues to secrete IGF1. It stimulates both the differentiation and proliferation of myoblasts. It also stimulates amino acid uptake and protein synthesis in muscle and other tissues. This chain is Somatotropin (GH1), found in Neovison vison (American mink).